Reading from the N-terminus, the 132-residue chain is Small ribosomal subunit protein uS8 (132 aa).

It belongs to the universal ribosomal protein uS8 family. Part of the 30S ribosomal subunit. Contacts proteins S5 and S12.

Functionally, one of the primary rRNA binding proteins, it binds directly to 16S rRNA central domain where it helps coordinate assembly of the platform of the 30S subunit. This chain is Small ribosomal subunit protein uS8, found in Stenotrophomonas maltophilia (strain R551-3).